Here is a 201-residue protein sequence, read N- to C-terminus: Recombination protein RecR (201 aa).

The C4-type zinc finger occupies 57–72 (CADCRTFTEQDVCNIC). Positions 81-176 (GQICVVESPA…SASRIAHGVP (96 aa)) constitute a Toprim domain.

This sequence belongs to the RecR family.

Functionally, may play a role in DNA repair. It seems to be involved in an RecBC-independent recombinational process of DNA repair. It may act with RecF and RecO. This chain is Recombination protein RecR, found in Enterobacter sp. (strain 638).